A 923-amino-acid chain; its full sequence is Neuropilin-1 (923 aa).

The N-terminal stretch at 1–21 (MERGLPLLCAVLALVLAPAGA) is a signal peptide. Residues 22–856 (FRNDKCGDTI…PGNVLKTLDP (835 aa)) lie on the Extracellular side of the membrane. Intrachain disulfides connect Cys27/Cys54, Cys82/Cys104, and Cys147/Cys173. 2 CUB domains span residues 27–141 (CGDT…YEIF) and 147–265 (CSQN…YSVL). Residue Asn150 is glycosylated (N-linked (GlcNAc...) asparagine). Ca(2+)-binding residues include Glu195, Asp209, and Asp250. Cys206 and Cys228 are oxidised to a cystine. N-linked (GlcNAc...) asparagine glycosylation is found at Asn261, Asn300, and Asn522. 2 cysteine pairs are disulfide-bonded: Cys275-Cys424 and Cys431-Cys583. F5/8 type C domains lie at 275–424 (CMEA…VYGC) and 431–583 (CSGM…LLGC). Ser612 carries O-linked (Xyl...) (chondroitin sulfate) serine; alternate glycosylation. A glycan (O-linked (Xyl...) (heparan sulfate) serine; alternate) is linked at Ser612. The region spanning 645–811 (TYGFNCEFGW…NHISQEDCAK (167 aa)) is the MAM domain. Residues 820–845 (PEIKIDETGSTPGYEGEGEGDKNISR) form a disordered region. An O-linked (Xyl...) (chondroitin sulfate) serine glycan is attached at Ser829. Asn842 carries an N-linked (GlcNAc...) asparagine glycan. A helical transmembrane segment spans residues 857 to 879 (ILITIIAMSALGVLLGAVCGVVL). Residues 880–923 (YCACWHNGMSERNLSALENYNFELVDGVKLKKDKLNTQSTYSEA) are Cytoplasmic-facing. Position 894 is a phosphoserine (Ser894).

It belongs to the neuropilin family. In terms of assembly, homodimer, and heterodimer with NRP2. Interacts with FER. Interacts with PLXNB1. Interacts with VEGFA. Interacts with ABCB8/MITOSUR in mitochondria. As to quaternary structure, (Microbial infection) Interacts with SARS coronavirus-2/SARS-CoV-2 spike protein S1 (via the CendR motif RRAR). As to expression, the expression of isoforms 1 and 2 does not seem to overlap. Expressed in olfactory epithelium (at protein level). Expressed in fibroblasts (at protein level). Expressed by the blood vessels of different tissues. In the developing embryo it is found predominantly in the nervous system. In adult tissues, it is highly expressed in heart and placenta; moderately in lung, liver, skeletal muscle, kidney and pancreas; and low in adult brain. Expressed in the central nervous system, including olfactory related regions such as the olfactory tubercles and paraolfactory gyri. In terms of tissue distribution, the expression of isoforms 1 and 2 does not seem to overlap. Found in liver hepatocytes, kidney distal and proximal tubules.

The protein resides in the secreted. It localises to the mitochondrion membrane. The protein localises to the cell membrane. It is found in the cytoplasm. Functionally, cell-surface receptor involved in the development of the cardiovascular system, in angiogenesis, in the formation of certain neuronal circuits and in organogenesis outside the nervous system. Mediates the chemorepulsant activity of semaphorins. Recognizes a C-end rule (CendR) motif R/KXXR/K on its ligands which causes cellular internalization and vascular leakage. It binds to semaphorin 3A, the PLGF-2 isoform of PGF, the VEGF165 isoform of VEGFA and VEGFB. Coexpression with KDR results in increased VEGF165 binding to KDR as well as increased chemotaxis. Regulates VEGF-induced angiogenesis. Binding to VEGFA initiates a signaling pathway needed for motor neuron axon guidance and cell body migration, including for the caudal migration of facial motor neurons from rhombomere 4 to rhombomere 6 during embryonic development. Regulates mitochondrial iron transport via interaction with ABCB8/MITOSUR. In terms of biological role, (Microbial infection) Acts as a host factor for human coronavirus SARS-CoV-2 infection. Recognizes and binds to CendR motif RRAR on SARS-CoV-2 spike protein S1 which enhances SARS-CoV-2 infection. Binds VEGF-165 and may inhibit its binding to cells. May induce apoptosis by sequestering VEGF-165. May bind as well various members of the semaphorin family. Its expression has an averse effect on blood vessel number and integrity. The chain is Neuropilin-1 from Homo sapiens (Human).